The primary structure comprises 329 residues: Stimulator of interferon genes protein (329 aa).

Over 1–4 the chain is Cytoplasmic; it reads MACV. A helical membrane pass occupies residues 5–25; that stretch reads LAIGSILFVWILGKGKYSGAQ. Position 26 (leucine 26) is a topological domain, lumenal. A helical transmembrane segment spans residues 27 to 52; sequence IYRMATNFAISQGCCLVTCACELTEE. Over 53 to 74 the chain is Cytoplasmic; the sequence is IKHLHTRYNGHYWRALKASFNL. Residues 75-88 form a helical membrane-spanning segment; that stretch reads SCAAFVTAILCYVF. Topologically, residues 89–98 are lumenal; it reads YEPKLMASLP. A helical membrane pass occupies residues 99 to 116; the sequence is LTIDITLTLLSWLFCWIL. At 117–329 the chain is on the cytoplasmic side; that stretch reads GIQGPTPATI…QQHSEEYSML (213 aa). The segment at 135–325 is cyclic dinucleotide-binding domain (CBD); sequence LNVAHGLAWS…KHIRQQHSEE (191 aa). 4 residues coordinate 2',3'-cGAMP: serine 144, tyrosine 149, arginine 220, and threonine 245. 3',3'-c-di-GMP is bound by residues serine 144, tyrosine 149, 220–223, and threonine 245; that span reads RVFK.

The protein belongs to the STING family. In terms of assembly, homodimer; forms a homodimer in absence of cyclic nucleotide (c-di-GMP or cGAMP). Homotetramer; in presence of cyclic nucleotide (c-di-GMP or cGAMP), forms tetramers and higher-order oligomers through side-by-side packing.

The protein resides in the endoplasmic reticulum membrane. The protein localises to the cytoplasm. It localises to the perinuclear region. Its subcellular location is the endoplasmic reticulum-Golgi intermediate compartment membrane. It is found in the golgi apparatus membrane. The protein resides in the cytoplasmic vesicle. The protein localises to the autophagosome membrane. It carries out the reaction H(+)(in) = H(+)(out). Sensor of cytosolic DNA from bacteria and viruses that promotes autophagy. Acts by recognizing and binding cyclic GMP-AMP (cGAMP), a messenger produced by CGAS in response to DNA in the cytosol. Exhibits guanine base-specific ligand recognition: binds 3'-3'linked cGAMP, 2'-3' linked cGAMP and 3'-3' linked c-di-GMP with much greater affinity as compared to 3'-3' linked c-di-AMP. Following cGAMP-binding, promotes the formation of autophagosomes, leading to target cytosolic DNA for degradation by the lysosome. Promotes autophagy by acting as a proton channel that directs proton efflux from the Golgi to facilitate LC3 lipidation. Lacks the C-terminal tail (CTT) found in other vertebrate orthologs which is essential for interferon signaling. The polypeptide is Stimulator of interferon genes protein (Xenopus tropicalis (Western clawed frog)).